A 445-amino-acid polypeptide reads, in one-letter code: Exodeoxyribonuclease 7 large subunit (445 aa).

The protein belongs to the XseA family. In terms of assembly, heterooligomer composed of large and small subunits.

It localises to the cytoplasm. The catalysed reaction is Exonucleolytic cleavage in either 5'- to 3'- or 3'- to 5'-direction to yield nucleoside 5'-phosphates.. Its function is as follows. Bidirectionally degrades single-stranded DNA into large acid-insoluble oligonucleotides, which are then degraded further into small acid-soluble oligonucleotides. This is Exodeoxyribonuclease 7 large subunit from Staphylococcus saprophyticus subsp. saprophyticus (strain ATCC 15305 / DSM 20229 / NCIMB 8711 / NCTC 7292 / S-41).